Here is a 335-residue protein sequence, read N- to C-terminus: POU domain, class 5, transcription factor 2 (335 aa).

Positions 1 to 23 (MAGRRSSNVCPFPGNSGGGLEGP) are disordered. A POU-specific domain is found at 113–187 (DVSAIQKEME…LLKMWLEEVD (75 aa)). Positions 205–264 (RKRRRASRERRIGSNLEKLFLQCPEPTPQQISYIAGRLRLQKDLVQVWFSNRSQMAGWPT) form a DNA-binding region, homeobox.

This sequence belongs to the POU transcription factor family. Class-5 subfamily. In terms of tissue distribution, highly restricted to adult testis.

Its subcellular location is the nucleus. Its function is as follows. Transcription factor that binds preferentially to the octamer motif (5'-ATGTTAAT-3'). May exert a regulatory function in meiotic events that are required for terminal differentiation of male germ cell. The sequence is that of POU domain, class 5, transcription factor 2 (Pou5f2) from Rattus norvegicus (Rat).